The following is a 301-amino-acid chain: tRNA pseudouridine synthase B (301 aa).

The active-site Nucleophile is the Asp45.

This sequence belongs to the pseudouridine synthase TruB family. Type 1 subfamily.

The catalysed reaction is uridine(55) in tRNA = pseudouridine(55) in tRNA. Functionally, responsible for synthesis of pseudouridine from uracil-55 in the psi GC loop of transfer RNAs. The sequence is that of tRNA pseudouridine synthase B from Streptomyces avermitilis (strain ATCC 31267 / DSM 46492 / JCM 5070 / NBRC 14893 / NCIMB 12804 / NRRL 8165 / MA-4680).